We begin with the raw amino-acid sequence, 378 residues long: Ribosomal RNA large subunit methyltransferase G (378 aa).

It belongs to the methyltransferase superfamily. RlmG family.

Its subcellular location is the cytoplasm. The enzyme catalyses guanosine(1835) in 23S rRNA + S-adenosyl-L-methionine = N(2)-methylguanosine(1835) in 23S rRNA + S-adenosyl-L-homocysteine + H(+). In terms of biological role, specifically methylates the guanine in position 1835 (m2G1835) of 23S rRNA. The chain is Ribosomal RNA large subunit methyltransferase G from Shewanella baltica (strain OS155 / ATCC BAA-1091).